We begin with the raw amino-acid sequence, 718 residues long: GMP synthase [glutamine-hydrolyzing] (718 aa).

The region spanning 43–247 is the Glutamine amidotransferase type-1 domain; that stretch reads VIVILDAGSQ…LIDICGCSAN (205 aa). Catalysis depends on for GATase activity residues Cys128, His221, and Glu223. Residues 248 to 457 form the GMPS ATP-PPase domain; the sequence is YTLDDREQQA…LGLSDSLVWR (210 aa). 275 to 281 is a binding site for ATP; it reads SGGVDST.

In terms of assembly, homodimer.

The enzyme catalyses XMP + L-glutamine + ATP + H2O = GMP + L-glutamate + AMP + diphosphate + 2 H(+). It participates in purine metabolism; GMP biosynthesis; GMP from XMP (L-Gln route): step 1/1. The sequence is that of GMP synthase [glutamine-hydrolyzing] (guaA) from Dictyostelium discoideum (Social amoeba).